The chain runs to 146 residues: Aspartate carbamoyltransferase regulatory chain (146 aa).

Zn(2+) contacts are provided by Cys102, Cys107, Cys131, and Cys134.

Belongs to the PyrI family. Contains catalytic and regulatory chains. Zn(2+) serves as cofactor.

Functionally, involved in allosteric regulation of aspartate carbamoyltransferase. The protein is Aspartate carbamoyltransferase regulatory chain of Clostridium botulinum (strain Okra / Type B1).